We begin with the raw amino-acid sequence, 337 residues long: DNA-directed RNA polymerase subunit alpha (337 aa).

Residues Met-1–Glu-233 form an alpha N-terminal domain (alpha-NTD) region. The segment at Lys-265–Phe-337 is alpha C-terminal domain (alpha-CTD).

This sequence belongs to the RNA polymerase alpha chain family. In plastids the minimal PEP RNA polymerase catalytic core is composed of four subunits: alpha, beta, beta', and beta''. When a (nuclear-encoded) sigma factor is associated with the core the holoenzyme is formed, which can initiate transcription.

Its subcellular location is the plastid. The protein localises to the chloroplast. It carries out the reaction RNA(n) + a ribonucleoside 5'-triphosphate = RNA(n+1) + diphosphate. In terms of biological role, DNA-dependent RNA polymerase catalyzes the transcription of DNA into RNA using the four ribonucleoside triphosphates as substrates. The sequence is that of DNA-directed RNA polymerase subunit alpha from Acorus gramineus (Dwarf sweet flag).